A 570-amino-acid polypeptide reads, in one-letter code: Probable electron transfer flavoprotein-ubiquinone oxidoreductase (570 aa).

Valine 13–isoleucine 27 serves as a coordination point for FAD. [4Fe-4S] cluster is bound by residues cysteine 515, cysteine 539, cysteine 542, and cysteine 545. Residues lysine 530–proline 559 form the 4Fe-4S ferredoxin-type domain.

Requires [4Fe-4S] cluster as cofactor. FAD is required as a cofactor.

The catalysed reaction is a ubiquinone + reduced [electron-transfer flavoprotein] = a ubiquinol + oxidized [electron-transfer flavoprotein] + H(+). Its function is as follows. Accepts electrons from ETF and reduces ubiquinone. This is Probable electron transfer flavoprotein-ubiquinone oxidoreductase (etfD) from Acinetobacter baylyi (strain ATCC 33305 / BD413 / ADP1).